The chain runs to 386 residues: uncharacterized protein (386 aa).

This sequence belongs to the TelA family.

This is an uncharacterized protein from Bacillus subtilis (strain 168).